The following is a 172-amino-acid chain: MASRKTVNRRQRPQRATSNVFAMFDQAQIQEFKEAFNMIDQNRDGFIDQEDLKDMFASLGKEVTEQFIDSMINEAPGAQPINFTMFLTLFGEKLTGTDPEEVIRNAFQCFDEDNSGKLNEEHLRELLTTMGERYSEEQVDELFRDAPIKGGQFDYVEFTRMLKHGTKDKDEA.

Phosphothreonine is present on Thr-17. Ser-18 is modified (phosphoserine). 3 consecutive EF-hand domains span residues 27-62 (AQIQEFKEAFNMIDQNRDGFIDQEDLKDMFASLGKE), 98-133 (DPEEVIRNAFQCFDEDNSGKLNEEHLRELLTTMGER), and 134-168 (YSEEQVDELFRDAPIKGGQFDYVEFTRMLKHGTKD). The Ca(2+) site is built by Asp-40, Asn-42, Asp-44, and Asp-51.

Myosin is a hexamer of 2 heavy chains and 4 light chains (two regulatory light chains and two essential light chains). May be phosphorylated by let-502 or/and pak-1 and dephosphorylated by mel-11 to regulate its activation and myosin II-mediated contraction. As to expression, expressed in the spermathecal and uterine walls. Weak expression in gonadal sheath and intestinal muscle. Not detected in vulval, pharyngeal or body wall muscles.

Its subcellular location is the cytoplasm. It localises to the cytoskeleton. Its function is as follows. Regulates myosin II activity and organization during embryo elongation. May be involved in the organization of mlc-5 into bundles. Required maternally for cytokinesis during meiosis and mitosis in the early embryo and for the establishment of embryonic anterior-posterior polarity. The chain is Myosin regulatory light chain from Caenorhabditis elegans.